Reading from the N-terminus, the 241-residue chain is NAD-dependent protein deacetylase 2 (241 aa).

Positions 1–241 (MTGKPLVAIL…ALPALLRGLG (241 aa)) constitute a Deacetylase sirtuin-type domain. The NAD(+) site is built by Ala-13, Thr-17, Arg-25, Gln-92, Val-94, Asp-95, and His-112. Residues Val-94 and Asp-95 each coordinate nicotinamide. Residue His-112 is the Proton acceptor of the active site. Residues Cys-120, Cys-123, Cys-145, and Cys-148 each coordinate Zn(2+). NAD(+)-binding residues include Thr-186, Ser-187, Asn-211, and Ile-229.

It belongs to the sirtuin family. Class U subfamily. Requires Zn(2+) as cofactor.

The protein resides in the cytoplasm. It carries out the reaction N(6)-acetyl-L-lysyl-[protein] + NAD(+) + H2O = 2''-O-acetyl-ADP-D-ribose + nicotinamide + L-lysyl-[protein]. In terms of biological role, NAD-dependent protein deacetylase which modulates the activities of several enzymes which are inactive in their acetylated form. The protein is NAD-dependent protein deacetylase 2 of Streptomyces coelicolor (strain ATCC BAA-471 / A3(2) / M145).